We begin with the raw amino-acid sequence, 560 residues long: Membrane protein insertase YidC (560 aa).

6 helical membrane-spanning segments follow: residues 5 to 25 (IINLIAAIILSLSIIFGWQYF), 334 to 354 (AIDFGWFYIITKPVFYAMNFF), 357 to 377 (YVGNFGVSILIVTVIIKLLMF), 431 to 451 (LPILVQIPLFFSIYKVLYVTI), 476 to 496 (LFGLLPFSPPSFLMIGAWPIL), and 522 to 542 (FMPLIFLFMFSSFPVGLLIYW).

It belongs to the OXA1/ALB3/YidC family. Type 1 subfamily. Interacts with the Sec translocase complex via SecD. Specifically interacts with transmembrane segments of nascent integral membrane proteins during membrane integration.

It is found in the cell inner membrane. Required for the insertion and/or proper folding and/or complex formation of integral membrane proteins into the membrane. Involved in integration of membrane proteins that insert both dependently and independently of the Sec translocase complex, as well as at least some lipoproteins. Aids folding of multispanning membrane proteins. This chain is Membrane protein insertase YidC, found in Rickettsia felis (strain ATCC VR-1525 / URRWXCal2) (Rickettsia azadi).